Here is a 36-residue protein sequence, read N- to C-terminus: Asteropin-A (36 aa).

3 disulfides stabilise this stretch: Cys2-Cys18, Cys9-Cys25, and Cys17-Cys35.

Sialidase inhibitor. Competitively inhibits bacterial sialidases, but not viral sialidases. Does not inhibit glycosidases or proteases. Has no antitumor activity. In Asteropus simplex (Marine sponge), this protein is Asteropin-A.